The sequence spans 63 residues: MAAVCDVCAKGPGFGKSVSHSHRRTNRRWNPNIQTVRAQVAPGNTRRMNVCTSCLKAGKVVRG.

This sequence belongs to the bacterial ribosomal protein bL28 family.

This is Large ribosomal subunit protein bL28A from Nocardia farcinica (strain IFM 10152).